The sequence spans 430 residues: 3-phosphoshikimate 1-carboxyvinyltransferase (430 aa).

3 residues coordinate 3-phosphoshikimate: K33, S34, and R38. K33 contributes to the phosphoenolpyruvate binding site. Residues G101 and R129 each contribute to the phosphoenolpyruvate site. Positions 172, 173, 174, 201, 319, and 346 each coordinate 3-phosphoshikimate. Residue Q174 coordinates phosphoenolpyruvate. E319 functions as the Proton acceptor in the catalytic mechanism. Phosphoenolpyruvate contacts are provided by R350, R391, and K416.

It belongs to the EPSP synthase family. As to quaternary structure, monomer.

The protein localises to the cytoplasm. The enzyme catalyses 3-phosphoshikimate + phosphoenolpyruvate = 5-O-(1-carboxyvinyl)-3-phosphoshikimate + phosphate. It participates in metabolic intermediate biosynthesis; chorismate biosynthesis; chorismate from D-erythrose 4-phosphate and phosphoenolpyruvate: step 6/7. In terms of biological role, catalyzes the transfer of the enolpyruvyl moiety of phosphoenolpyruvate (PEP) to the 5-hydroxyl of shikimate-3-phosphate (S3P) to produce enolpyruvyl shikimate-3-phosphate and inorganic phosphate. In Corynebacterium glutamicum (strain R), this protein is 3-phosphoshikimate 1-carboxyvinyltransferase.